Here is a 439-residue protein sequence, read N- to C-terminus: Ribosomal protein uS12 methylthiotransferase RimO (439 aa).

The 111-residue stretch at 5–115 (PKIGFVSLGC…LIEAVHTHAP (111 aa)) folds into the MTTase N-terminal domain. [4Fe-4S] cluster contacts are provided by cysteine 14, cysteine 50, cysteine 79, cysteine 146, cysteine 150, and cysteine 153. The 238-residue stretch at 132-369 (LTPRHYSYLK…MGLQAQISTD (238 aa)) folds into the Radical SAM core domain. Residues 372 to 439 (QRFVGTEQQV…ESTEYDLIAD (68 aa)) form the TRAM domain.

It belongs to the methylthiotransferase family. RimO subfamily. Requires [4Fe-4S] cluster as cofactor.

Its subcellular location is the cytoplasm. The catalysed reaction is L-aspartate(89)-[ribosomal protein uS12]-hydrogen + (sulfur carrier)-SH + AH2 + 2 S-adenosyl-L-methionine = 3-methylsulfanyl-L-aspartate(89)-[ribosomal protein uS12]-hydrogen + (sulfur carrier)-H + 5'-deoxyadenosine + L-methionine + A + S-adenosyl-L-homocysteine + 2 H(+). Its function is as follows. Catalyzes the methylthiolation of an aspartic acid residue of ribosomal protein uS12. The polypeptide is Ribosomal protein uS12 methylthiotransferase RimO (Francisella tularensis subsp. novicida (strain U112)).